Consider the following 89-residue polypeptide: Small ribosomal subunit protein uS15 (89 aa).

Belongs to the universal ribosomal protein uS15 family. In terms of assembly, part of the 30S ribosomal subunit. Forms a bridge to the 50S subunit in the 70S ribosome, contacting the 23S rRNA.

In terms of biological role, one of the primary rRNA binding proteins, it binds directly to 16S rRNA where it helps nucleate assembly of the platform of the 30S subunit by binding and bridging several RNA helices of the 16S rRNA. Forms an intersubunit bridge (bridge B4) with the 23S rRNA of the 50S subunit in the ribosome. The protein is Small ribosomal subunit protein uS15 of Oleidesulfovibrio alaskensis (strain ATCC BAA-1058 / DSM 17464 / G20) (Desulfovibrio alaskensis).